The sequence spans 176 residues: Adenine phosphoribosyltransferase (176 aa).

Belongs to the purine/pyrimidine phosphoribosyltransferase family. In terms of assembly, homodimer.

It localises to the cytoplasm. The enzyme catalyses AMP + diphosphate = 5-phospho-alpha-D-ribose 1-diphosphate + adenine. Its pathway is purine metabolism; AMP biosynthesis via salvage pathway; AMP from adenine: step 1/1. Catalyzes a salvage reaction resulting in the formation of AMP, that is energically less costly than de novo synthesis. This chain is Adenine phosphoribosyltransferase, found in Borrelia garinii subsp. bavariensis (strain ATCC BAA-2496 / DSM 23469 / PBi) (Borreliella bavariensis).